The chain runs to 226 residues: Putative O-methyltransferase Mvan_4497 (226 aa).

S-adenosyl-L-methionine contacts are provided by residues valine 53, glutamate 75, glycine 77–threonine 78, serine 83, aspartate 101, and valine 102. Position 149 (aspartate 149) interacts with substrate.

It belongs to the class I-like SAM-binding methyltransferase superfamily. Cation-dependent O-methyltransferase family.

In Mycolicibacterium vanbaalenii (strain DSM 7251 / JCM 13017 / BCRC 16820 / KCTC 9966 / NRRL B-24157 / PYR-1) (Mycobacterium vanbaalenii), this protein is Putative O-methyltransferase Mvan_4497.